Consider the following 1096-residue polypeptide: Lysine-specific demethylase PHF2 (1096 aa).

The PHD-type zinc finger occupies proline 5–threonine 56. The 2-oxoglutarate site is built by threonine 193 and threonine 246. Residues phenylalanine 197–arginine 353 form the JmjC domain. Positions 249 and 251 each coordinate Fe cation. 2-oxoglutarate contacts are provided by tyrosine 259, lysine 266, tyrosine 321, and threonine 323. A Fe cation-binding site is contributed by tyrosine 321. 2 disordered regions span residues lysine 447 to lysine 634 and glycine 646 to arginine 674. Serine 474 carries the post-translational modification Phosphoserine. Residue threonine 479 is modified to Phosphothreonine. The span at serine 503–proline 518 shows a compositional bias: pro residues. The residue at position 539 (serine 539) is a Phosphoserine. 2 stretches are compositionally biased toward basic and acidic residues: residues leucine 548–lysine 563 and aspartate 578–lysine 624. At serine 655 the chain carries Phosphoserine. Basic and acidic residues predominate over residues phenylalanine 665–arginine 674. A phosphoserine mark is found at serine 681 and serine 705. Residue lysine 711 forms a Glycyl lysine isopeptide (Lys-Gly) (interchain with G-Cter in SUMO2) linkage. Disordered stretches follow at residues threonine 719–leucine 799, alanine 817–leucine 846, and tyrosine 877–alanine 1078. Lysine 720 is subject to N6-acetyllysine. A Phosphotyrosine modification is found at tyrosine 728. The segment covering lysine 729 to serine 757 has biased composition (basic and acidic residues). Phosphoserine is present on residues serine 730, serine 733, serine 734, and serine 738. Phosphoserine occurs at positions 879, 882, and 899. Positions arginine 916–threonine 925 are enriched in basic and acidic residues. The segment covering serine 949–leucine 959 has biased composition (basic residues). Composition is skewed to low complexity over residues threonine 960–serine 1009 and threonine 1027–threonine 1040. Residues arginine 1053 to alanine 1065 show a composition bias toward polar residues. At serine 1056 the chain carries Phosphoserine; by PKA.

Belongs to the JHDM1 histone demethylase family. JHDM1D subfamily. As to quaternary structure, component of the PHF2-ARID5B complex, at least composed of PHF2 and ARID5B. Interacts with HNF4A and NR1H4. Interacts with RELA. In terms of processing, phosphorylated by PKA on specific serine residues, leading to the formation of an active lysine demethylase complex. In terms of tissue distribution, widely expressed, including in liver (at protein level).

It is found in the nucleus. The protein localises to the nucleolus. The protein resides in the chromosome. It localises to the centromere. Its subcellular location is the kinetochore. It catalyses the reaction N(6),N(6)-dimethyl-L-lysyl(9)-[histone H3] + 2-oxoglutarate + O2 = N(6)-methyl-L-lysyl(9)-[histone H3] + formaldehyde + succinate + CO2. With respect to regulation, enzymatically inactive by itself, and become active following phosphorylation by PKA. Functionally, lysine demethylase that demethylates both histones and non-histone proteins. Enzymatically inactive by itself, and becomes active following phosphorylation by PKA: forms a complex with ARID5B and mediates demethylation of methylated ARID5B. Demethylation of ARID5B leads to target the PHF2-ARID5B complex to target promoters, where PHF2 mediates demethylation of dimethylated 'Lys-9' of histone H3 (H3K9me2), followed by transcription activation of target genes. The PHF2-ARID5B complex acts as a coactivator of HNF4A in liver. PHF2 is recruited to trimethylated 'Lys-4' of histone H3 (H3K4me3) at rDNA promoters and promotes expression of rDNA. Involved in the activation of toll-like receptor 4 (TLR4)-target inflammatory genes in macrophages by catalyzing the demethylation of trimethylated histone H4 lysine 20 (H4K20me3) at the gene promoters. This is Lysine-specific demethylase PHF2 from Homo sapiens (Human).